We begin with the raw amino-acid sequence, 341 residues long: Spindle assembly checkpoint protein BUB3 (341 aa).

WD repeat units follow at residues 9 to 48, 54 to 96, 97 to 137, 144 to 185, 191 to 233, 249 to 288, and 292 to 329; these read APKD…KNVD, RYKH…QALT, NNEA…DGVI, SNNT…DDNG, GLKY…YNSS, NLAY…KIKN, and FNED…IELN.

It belongs to the WD repeat BUB3 family. In terms of assembly, component of the mitotic checkpoint complex (MCC) which consists of MAD2, MAD3, BUB3 and CDC20. Part of complex consisting of MAD1, BUB1 and BUB3 after activation of spindle checkpoint. Part of the BUB1-BUB3 complex, composed of BUB1 and BUB3. Interacts with SPC105 (via phosphorylated MELT motifs); the interaction is direct and occurs when part of the BUB1-BUB3 complex. Interacts with MAD3; the interaction is direct. Post-translationally, phosphorylated by BUB1.

The protein resides in the nucleus. Its subcellular location is the chromosome. It localises to the centromere. It is found in the kinetochore. In terms of biological role, involved in mitotic spindle assembly checkpoint signaling, a process that delays anaphase until chromosomes are bioriented on the spindle, and in the repair of incorrect mitotic kinetochore-spindle microtubule attachments. Component of the mitotic checkpoint complex (MCC) which inhibits the ubiquitin ligase activity of the anaphase promoting complex/cyclosome (APC/C) by preventing its activation by CDC20. The polypeptide is Spindle assembly checkpoint protein BUB3 (BUB3) (Saccharomyces cerevisiae (strain ATCC 204508 / S288c) (Baker's yeast)).